The following is a 122-amino-acid chain: Double-headed protease inhibitor, submandibular gland (122 aa).

Kazal-like domains are found at residues 10-70 (GGRK…KCDI) and 71-121 (ECPQ…QCQS). Intrachain disulfides connect Cys16-Cys50, Cys28-Cys47, Cys36-Cys68, Cys72-Cys101, Cys79-Cys98, and Cys87-Cys119.

It localises to the secreted. Functionally, this inhibitor is composed of two homologous actively inhibiting halves: one which inhibits trypsin, the other which inhibits elastase. The protein is Double-headed protease inhibitor, submandibular gland of Mustela lutreola (European mink).